A 600-amino-acid polypeptide reads, in one-letter code: Elongation factor 4 (600 aa).

In terms of domain architecture, tr-type G spans 5–187 (SNIRNFSIIA…ALVERIPAPT (183 aa)). GTP-binding positions include 17–22 (DHGKST) and 134–137 (NKID).

The protein belongs to the TRAFAC class translation factor GTPase superfamily. Classic translation factor GTPase family. LepA subfamily.

It is found in the cell inner membrane. It catalyses the reaction GTP + H2O = GDP + phosphate + H(+). Required for accurate and efficient protein synthesis under certain stress conditions. May act as a fidelity factor of the translation reaction, by catalyzing a one-codon backward translocation of tRNAs on improperly translocated ribosomes. Back-translocation proceeds from a post-translocation (POST) complex to a pre-translocation (PRE) complex, thus giving elongation factor G a second chance to translocate the tRNAs correctly. Binds to ribosomes in a GTP-dependent manner. The chain is Elongation factor 4 from Psychrobacter sp. (strain PRwf-1).